Reading from the N-terminus, the 136-residue chain is Organic hydroperoxide resistance protein OhrB (136 aa).

The protein belongs to the OsmC/Ohr family.

Its function is as follows. Involved in organic hydroperoxide resistance. In Bacillus subtilis (strain 168), this protein is Organic hydroperoxide resistance protein OhrB (ohrB).